Consider the following 204-residue polypeptide: MNQDIYTYLHQLQQALQTQQAAILNLEDQVRQLQEELNELKNRPSSSVGKVEYKFDQLKVENLNGTLNIGLNPFSAKGQQIEDLQVDTETLKVNPETETNPDFYQGILQEMHRYLDEEAYNRILHFEQEERTPLDEMYRQMMVDDIKKQMEHRLPYYLSQAQSYEGISTDPDYLRDIIIQAMKQDIDKAFLSFIQHIPGNFRKE.

In terms of biological role, required for the formation of functionally normal spores. Could be involved in the establishment of normal spore coat structure and/or permeability, which allows the access of germinants to their receptor. In Bacillus cereus, this protein is Probable spore germination protein GerPC (gerPC).